A 306-amino-acid polypeptide reads, in one-letter code: MIRIGTRGSLLATTQAGGIRDALRAKGHEAELVIVTTAGDQSAAPVEQIGVGVFTAALREAIADDVVDVAVHSYKDLPTAADPRFVIPAIPPREDYRDALVARDGLVLGELPAGSVIGTSSPRRAAQLRALGLGLEIRPLRGNLDTRLSRVSNGDLDGVVVARAGLARIGRLDHITETLEPVQVLPAPAQGALAVECRSEATDLVAVLAELDHADTRAAVTAERALLAELEAGCTAPVGAIAEVVESIDEEGRVFDELSLRGCAAALDGSDVIRASGIGTPDRAAELGLAVARELLDLGARALIGR.

C234 carries the post-translational modification S-(dipyrrolylmethanemethyl)cysteine.

This sequence belongs to the HMBS family. As to quaternary structure, monomer. It depends on dipyrromethane as a cofactor.

The catalysed reaction is 4 porphobilinogen + H2O = hydroxymethylbilane + 4 NH4(+). It functions in the pathway porphyrin-containing compound metabolism; protoporphyrin-IX biosynthesis; coproporphyrinogen-III from 5-aminolevulinate: step 2/4. Functionally, tetrapolymerization of the monopyrrole PBG into the hydroxymethylbilane pre-uroporphyrinogen in several discrete steps. This is Porphobilinogen deaminase from Mycobacteroides abscessus (strain ATCC 19977 / DSM 44196 / CCUG 20993 / CIP 104536 / JCM 13569 / NCTC 13031 / TMC 1543 / L948) (Mycobacterium abscessus).